An 806-amino-acid chain; its full sequence is Breast cancer anti-estrogen resistance protein 3 homolog (806 aa).

One can recognise an SH2 domain in the interval Trp152–Ile251. Disordered regions lie at residues Arg308 to Ser343 and Arg390 to Gln412. The region spanning Asp538–Pro805 is the Ras-GEF domain.

Its function is as follows. May act as an adapter protein. The sequence is that of Breast cancer anti-estrogen resistance protein 3 homolog (bcar3) from Xenopus laevis (African clawed frog).